A 333-amino-acid polypeptide reads, in one-letter code: MSQPPVAVLGAGSWGTALAMHLARQGHRVRLWGRDPEAMAAMAEANCNTRYLPDAPFPPGLEPTADLDAALRESSCWLVVVPSQAFREMLQKLAPYRDDARVLVWATKGLEEHSGQWLHQVVAEEMGVNFPCAVISGPSFAKEVARGLPTALTVASTTPGVAERVAEWFHGERMRVYLSDDVLGVQLGGAFKNVLAIAAGISDGLGFGANARAALITRGLAELMRLGDAAGARRETLMGLSGLGDLVLTCTDDQSRNRRLGLALGRGESLDAALAAIGQAVEGARTARMAVSKAAELGVDMPICHQVHRVLYVGHSAIEAVGELLGRDQKPEF.

NADPH is bound by residues S13, W14, R34, and K108. Sn-glycerol 3-phosphate contacts are provided by K108, G137, and S139. NADPH is bound at residue A141. The sn-glycerol 3-phosphate site is built by K192, D245, S255, R256, and N257. The active-site Proton acceptor is K192. Residue R256 participates in NADPH binding. E282 provides a ligand contact to NADPH.

Belongs to the NAD-dependent glycerol-3-phosphate dehydrogenase family.

It localises to the cytoplasm. It carries out the reaction sn-glycerol 3-phosphate + NAD(+) = dihydroxyacetone phosphate + NADH + H(+). The catalysed reaction is sn-glycerol 3-phosphate + NADP(+) = dihydroxyacetone phosphate + NADPH + H(+). It functions in the pathway membrane lipid metabolism; glycerophospholipid metabolism. Its function is as follows. Catalyzes the reduction of the glycolytic intermediate dihydroxyacetone phosphate (DHAP) to sn-glycerol 3-phosphate (G3P), the key precursor for phospholipid synthesis. This chain is Glycerol-3-phosphate dehydrogenase [NAD(P)+], found in Thioalkalivibrio sulfidiphilus (strain HL-EbGR7).